Reading from the N-terminus, the 107-residue chain is Putative double-stranded DNA mimic protein Spro_2690 (107 aa).

Belongs to the putative dsDNA mimic protein family.

In terms of biological role, may act as a double-stranded DNA (dsDNA) mimic. Probably regulates the activity of a dsDNA-binding protein. The sequence is that of Putative double-stranded DNA mimic protein Spro_2690 from Serratia proteamaculans (strain 568).